The sequence spans 76 residues: uncharacterized protein (76 aa).

This is an uncharacterized protein from Escherichia coli O157:H7.